Here is a 60-residue protein sequence, read N- to C-terminus: Cytotoxin 4 (60 aa).

4 disulfide bridges follow: Cys3–Cys21, Cys14–Cys38, Cys42–Cys53, and Cys54–Cys59.

It belongs to the three-finger toxin family. Short-chain subfamily. Type IA cytotoxin sub-subfamily. Monomer in solution; Homodimer and oligomer in the presence of negatively charged lipids forming a pore with a size ranging between 20 and 30 Angstroms. Expressed by the venom gland.

The protein localises to the secreted. The protein resides in the target cell membrane. Its function is as follows. Shows cytolytic activity on many different cells by forming pore in lipid membranes. In vivo, increases heart rate or kills the animal by cardiac arrest. In addition, it binds to heparin with high affinity, interacts with Kv channel-interacting protein 1 (KCNIP1) in a calcium-independent manner, and binds to integrin alpha-V/beta-3 (ITGAV/ITGB3) with moderate affinity. This Naja annulifera (Banded Egyptian cobra) protein is Cytotoxin 4.